The sequence spans 475 residues: Aspartyl/glutamyl-tRNA(Asn/Gln) amidotransferase subunit B (475 aa).

The protein belongs to the GatB/GatE family. GatB subfamily. Heterotrimer of A, B and C subunits.

The catalysed reaction is L-glutamyl-tRNA(Gln) + L-glutamine + ATP + H2O = L-glutaminyl-tRNA(Gln) + L-glutamate + ADP + phosphate + H(+). It catalyses the reaction L-aspartyl-tRNA(Asn) + L-glutamine + ATP + H2O = L-asparaginyl-tRNA(Asn) + L-glutamate + ADP + phosphate + 2 H(+). Its function is as follows. Allows the formation of correctly charged Asn-tRNA(Asn) or Gln-tRNA(Gln) through the transamidation of misacylated Asp-tRNA(Asn) or Glu-tRNA(Gln) in organisms which lack either or both of asparaginyl-tRNA or glutaminyl-tRNA synthetases. The reaction takes place in the presence of glutamine and ATP through an activated phospho-Asp-tRNA(Asn) or phospho-Glu-tRNA(Gln). This is Aspartyl/glutamyl-tRNA(Asn/Gln) amidotransferase subunit B from Bacillus anthracis (strain A0248).